The following is a 154-amino-acid chain: Ribosomal RNA large subunit methyltransferase H (154 aa).

S-adenosyl-L-methionine is bound by residues Leu-70, Gly-102, and 121–126; that span reads LSRLTF.

This sequence belongs to the RNA methyltransferase RlmH family. In terms of assembly, homodimer.

It is found in the cytoplasm. It catalyses the reaction pseudouridine(1915) in 23S rRNA + S-adenosyl-L-methionine = N(3)-methylpseudouridine(1915) in 23S rRNA + S-adenosyl-L-homocysteine + H(+). In terms of biological role, specifically methylates the pseudouridine at position 1915 (m3Psi1915) in 23S rRNA. In Geobacter metallireducens (strain ATCC 53774 / DSM 7210 / GS-15), this protein is Ribosomal RNA large subunit methyltransferase H.